Reading from the N-terminus, the 87-residue chain is UPF0213 protein SYNAS_10430 (87 aa).

The 77-residue stretch at 2–78 folds into the GIY-YIG domain; sequence SKNYVYILEC…KKMSRAEKLQ (77 aa).

The protein belongs to the UPF0213 family.

The chain is UPF0213 protein SYNAS_10430 from Syntrophus aciditrophicus (strain SB).